Reading from the N-terminus, the 485-residue chain is Kynureninase 1 (485 aa).

Residues leucine 155, threonine 156, 183 to 186, aspartate 267, histidine 270, and tyrosine 292 contribute to the pyridoxal 5'-phosphate site; that span reads FPSD. Lysine 293 bears the N6-(pyridoxal phosphate)lysine mark. Pyridoxal 5'-phosphate contacts are provided by tryptophan 330 and asparagine 358.

Belongs to the kynureninase family. Homodimer. Pyridoxal 5'-phosphate serves as cofactor.

The protein localises to the cytoplasm. It carries out the reaction L-kynurenine + H2O = anthranilate + L-alanine + H(+). The enzyme catalyses 3-hydroxy-L-kynurenine + H2O = 3-hydroxyanthranilate + L-alanine + H(+). Its pathway is amino-acid degradation; L-kynurenine degradation; L-alanine and anthranilate from L-kynurenine: step 1/1. It participates in cofactor biosynthesis; NAD(+) biosynthesis; quinolinate from L-kynurenine: step 2/3. Catalyzes the cleavage of L-kynurenine (L-Kyn) and L-3-hydroxykynurenine (L-3OHKyn) into anthranilic acid (AA) and 3-hydroxyanthranilic acid (3-OHAA), respectively. This is Kynureninase 1 (kyn-1) from Neurospora crassa (strain ATCC 24698 / 74-OR23-1A / CBS 708.71 / DSM 1257 / FGSC 987).